The sequence spans 299 residues: Glycine--tRNA ligase alpha subunit (299 aa).

It belongs to the class-II aminoacyl-tRNA synthetase family. In terms of assembly, tetramer of two alpha and two beta subunits.

It is found in the cytoplasm. It catalyses the reaction tRNA(Gly) + glycine + ATP = glycyl-tRNA(Gly) + AMP + diphosphate. The sequence is that of Glycine--tRNA ligase alpha subunit from Dictyoglomus turgidum (strain DSM 6724 / Z-1310).